A 1124-amino-acid chain; its full sequence is MSSSRPSQSSTTSARSKHSARIIAQTTIDAKLHADFEESGDSFDYSSSVRVTSVAGDERKPKSDRVTTAYLNQIQKGKFIQPFGCLLALDEKTFKVIAFSENAPEMLTMVSHAVPSVGELPALGIGTDIRTIFTGPSAAALQKALGFGEVSLLNPVLVHCKTSGKPYYAIVHRVTGSLIIDFEPVKPYEVPMTAAGALQSYKLAAKAITRLQALPSGSMERLCDTMVQEVFELTGYDRVMTYKFHDDDHGEVVAEITKPGLDPYLGLHYPATDIPQAARFLFMKNKVRMICDCRAKHVKVVQDEKLPFDLTLCGSTLRAPHYCHLQYMENMSSIASLVMAVVVNDGDEEGESSDSTQSQKRKRLWGLVVCHNTTPRFVPFPLRYACEFLAQVFAIHVNKELELESQILEKNILRTQTLLCDMLMRVAPLGIVSQSPNIMDLVKCDGAALLYKNKIHRLGMTPSDFQLHDIVSWLSEYHTDSTGLSTDSLYDAGFPGALALGDVVCGMAAVRISDKGWLFWYRSHTAAEVRWGGAKHEPGEKDDGRKMHPRSSFKAFLEVVKTRSVPWKDYEMDAIHSLQLILRNASKDADAMDSNTNIIHTKLNDLKIDGLQELEAVTAEMVRLIETASVPIFAVDVDGQLNGWNTKIAELTGLPVDEAIGNHLLTLVEDSSVDTVSKMLELALQGKEERNVEFEIKTHGPSGDSSPISLIVNACASRDVGDSVVGVCFIAQDITGQKNIMDKFTRIEGDYRAIIQNPHPLIPPIFGTDQFGWCSEWNSAMTKLTGWRRDDVIDKMLLGEVFGTQAACCRLKNQEAFVNFGVVLNNAMTGQECAKISFGFFARNGKYVECLLCVSKRLDREGAVTGLFCFLQLASHELQQALHIQRLSEQTALKRLKVLAYIRRQIRNPLSGIIFSRKMLEGTNLGEEQKNILRTSSQCQRQLNKILDDTDLDSIIDGYLDLEMLEFKLHEVLVASISQIMMKSNGKNIMIVNDMVEDLLNETLYGDSPRLQQVLANFLLVCVNSTPSGGQLSISGTLTKDRIGESVQLALLEVRISHTGGGVPEELLSQMFGTEAEASEEGISLLISRKLVKLMNGEVQYLREAGRSTFIISVELAVATKSSC.

Residues 1-14 (MSSSRPSQSSTTSA) show a composition bias toward low complexity. A disordered region spans residues 1-20 (MSSSRPSQSSTTSARSKHSA). Residues 218–401 (SMERLCDTMV…VFAIHVNKEL (184 aa)) enclose the GAF domain. Residue cysteine 323 coordinates phytochromobilin. One can recognise a PAS 1 domain in the interval 617 to 687 (VTAEMVRLIE…KMLELALQGK (71 aa)). The PAC domain occupies 690–746 (RNVEFEIKTHGPSGDSSPISLIVNACASRDVGDSVVGVCFIAQDITGQKNIMDKFTR). A PAS 2 domain is found at 747–821 (IEGDYRAIIQ…KNQEAFVNFG (75 aa)). The 218-residue stretch at 901–1118 (YIRRQIRNPL…TFIISVELAV (218 aa)) folds into the Histidine kinase domain.

This sequence belongs to the phytochrome family. Homodimer. In terms of processing, contains one covalently linked phytochromobilin chromophore.

In terms of biological role, regulatory photoreceptor which exists in two forms that are reversibly interconvertible by light: the Pr form that absorbs maximally in the red region of the spectrum and the Pfr form that absorbs maximally in the far-red region. Photoconversion of Pr to Pfr induces an array of morphogenic responses, whereas reconversion of Pfr to Pr cancels the induction of those responses. Pfr controls the expression of a number of nuclear genes including those encoding the small subunit of ribulose-bisphosphate carboxylase, chlorophyll A/B binding protein, protochlorophyllide reductase, rRNA, etc. It also controls the expression of its own gene(s) in a negative feedback fashion. The sequence is that of Phytochrome A1 (PHYA1) from Nicotiana tabacum (Common tobacco).